The primary structure comprises 356 residues: NADH dehydrogenase (ubiquinone) complex I, assembly factor 6 homolog (356 aa).

A mitochondrion-targeting transit peptide spans 1-41; that stretch reads MIRNSGRILFNSLKNSNVKLINRNVIINSNIRLFSTSTNNT.

This sequence belongs to the NDUFAF6 family.

The protein localises to the mitochondrion inner membrane. Involved in the assembly of mitochondrial NADH:ubiquinone oxidoreductase complex (complex I) at early stages. This is NADH dehydrogenase (ubiquinone) complex I, assembly factor 6 homolog from Dictyostelium discoideum (Social amoeba).